A 107-amino-acid polypeptide reads, in one-letter code: Pre-mRNA-splicing factor RDS3 (107 aa).

Belongs to the PHF5 family. As to quaternary structure, component of the spliceosome where it interacts with CUS1, HSH49, HSH155, IST3 and RSE1. Also interacts with YRA1.

It localises to the nucleus. Its function is as follows. Required for pre-mRNA splicing. Involved in regulation of drug sensitivity and may play a role in multidrug resistance. This Saccharomyces cerevisiae (strain ATCC 204508 / S288c) (Baker's yeast) protein is Pre-mRNA-splicing factor RDS3 (RDS3).